A 92-amino-acid chain; its full sequence is Small ribosomal subunit protein bS21A (92 aa).

The span at 25-52 (GVFREMKQRRSYEKPSERKTREKSEAIR) shows a compositional bias: basic and acidic residues. Residues 25-92 (GVFREMKQRR…LPQTAARPAG (68 aa)) are disordered.

The protein belongs to the bacterial ribosomal protein bS21 family.

This is Small ribosomal subunit protein bS21A from Bradyrhizobium diazoefficiens (strain JCM 10833 / BCRC 13528 / IAM 13628 / NBRC 14792 / USDA 110).